A 377-amino-acid polypeptide reads, in one-letter code: DNA primase small subunit PriS (377 aa).

Residues D99, D101, and D274 contribute to the active site.

It belongs to the eukaryotic-type primase small subunit family. Heterodimer of a small subunit (PriS) and a large subunit (PriL). The cofactor is Mg(2+). It depends on Mn(2+) as a cofactor.

Catalytic subunit of DNA primase, an RNA polymerase that catalyzes the synthesis of short RNA molecules used as primers for DNA polymerase during DNA replication. The small subunit contains the primase catalytic core and has DNA synthesis activity on its own. Binding to the large subunit stabilizes and modulates the activity, increasing the rate of DNA synthesis while decreasing the length of the DNA fragments, and conferring RNA synthesis capability. The DNA polymerase activity may enable DNA primase to also catalyze primer extension after primer synthesis. May also play a role in DNA repair. This chain is DNA primase small subunit PriS, found in Staphylothermus marinus (strain ATCC 43588 / DSM 3639 / JCM 9404 / F1).